Reading from the N-terminus, the 100-residue chain is Urease subunit gamma (100 aa).

It belongs to the urease gamma subunit family. Heterotrimer of UreA (gamma), UreB (beta) and UreC (alpha) subunits. Three heterotrimers associate to form the active enzyme.

Its subcellular location is the cytoplasm. The catalysed reaction is urea + 2 H2O + H(+) = hydrogencarbonate + 2 NH4(+). The protein operates within nitrogen metabolism; urea degradation; CO(2) and NH(3) from urea (urease route): step 1/1. The protein is Urease subunit gamma of Halalkalibacterium halodurans (strain ATCC BAA-125 / DSM 18197 / FERM 7344 / JCM 9153 / C-125) (Bacillus halodurans).